The chain runs to 423 residues: Nucleoporin NUP42 (423 aa).

The segment at Met1–Ala25 adopts a C3H1-type zinc-finger fold. An FG 1 repeat occupies Phe14–Gly15. Residues Gly24 to Ser85 form a disordered region. The segment covering Ser40–Trp69 has biased composition (polar residues). The interaction with HIV-1 Vpr stretch occupies residues Gly94 to Asn170. One copy of the FG 2 repeat lies at Phe95–Gly96. Ser106 bears the Phosphoserine mark. FG repeat units lie at residues Phe218–Gly219, Phe220–Gly221, Phe265–Gly266, Phe271–Gly272, Phe288–Gly289, Phe290–Gly291, Phe311–Gly312, Phe336–Gly337, Phe345–Gly346, and Phe364–Gly365. The interval Gly365–Val423 is interaction with GLE1.

In terms of assembly, probable component of the nuclear pore complex (NPC). Interacts with nuclear export protein NXF1. Interacts with GLE1. Able to form a heterotrimer with NUP155 and GLE1 in vitro. Interacts with XPO1. (Microbial infection) Interacts with the HIV-1 virus proteins Rev and Vpr. The interaction with HIV-1 Rev, a protein that mediates nuclear export of unspliced viral RNAs, suggests that its function may be bypassed by the HIV-1 virus. Post-translationally, O-glycosylated. As to expression, ubiquitously expressed.

Its subcellular location is the nucleus. It localises to the nuclear pore complex. It is found in the nucleus membrane. In terms of biological role, required for the export of mRNAs containing poly(A) tails from the nucleus into the cytoplasm. Its function is as follows. (Microbial infection) In case of infection by HIV-1, it may participate in the docking of viral Vpr at the nuclear envelope. This chain is Nucleoporin NUP42, found in Homo sapiens (Human).